A 152-amino-acid polypeptide reads, in one-letter code: Transcriptional regulator MraZ (152 aa).

SpoVT-AbrB domains follow at residues 5 to 52 (ANAI…PLPE) and 81 to 124 (ATEG…DHSV).

This sequence belongs to the MraZ family. In terms of assembly, forms oligomers.

It is found in the cytoplasm. The protein localises to the nucleoid. This chain is Transcriptional regulator MraZ, found in Pseudoalteromonas atlantica (strain T6c / ATCC BAA-1087).